A 395-amino-acid polypeptide reads, in one-letter code: Acetylornithine aminotransferase (395 aa).

Pyridoxal 5'-phosphate-binding positions include 117–118 (GA) and F144. A N(2)-acetyl-L-ornithine-binding site is contributed by R147. Residue 230 to 233 (DEVQ) coordinates pyridoxal 5'-phosphate. K259 carries the post-translational modification N6-(pyridoxal phosphate)lysine. S285 serves as a coordination point for N(2)-acetyl-L-ornithine. A pyridoxal 5'-phosphate-binding site is contributed by T286.

This sequence belongs to the class-III pyridoxal-phosphate-dependent aminotransferase family. ArgD subfamily. In terms of assembly, homodimer. It depends on pyridoxal 5'-phosphate as a cofactor.

It localises to the cytoplasm. It carries out the reaction N(2)-acetyl-L-ornithine + 2-oxoglutarate = N-acetyl-L-glutamate 5-semialdehyde + L-glutamate. It functions in the pathway amino-acid biosynthesis; L-arginine biosynthesis; N(2)-acetyl-L-ornithine from L-glutamate: step 4/4. In Methanosarcina mazei (strain ATCC BAA-159 / DSM 3647 / Goe1 / Go1 / JCM 11833 / OCM 88) (Methanosarcina frisia), this protein is Acetylornithine aminotransferase.